The sequence spans 1121 residues: Putative ATP-dependent RNA helicase ECM32 (1121 aa).

The disordered stretch occupies residues 157 to 187 (NSTRKPRKKGGRRVGRGKKGRKGAKIKKEKK). Residues 160–184 (RKPRKKGGRRVGRGKKGRKGAKIKK) show a composition bias toward basic residues. S227 is subject to Phosphoserine. The tract at residues 233 to 452 (AKVSKSETSR…NQEKNNGKTK (220 aa)) is disordered. Positions 251–263 (NKGKGNKANHKKN) are enriched in basic residues. A compositionally biased stretch (polar residues) spans 278-287 (IRNNVRNSQP). Residues 307–316 (GKNESVDKHQ) are compositionally biased toward basic and acidic residues. Low complexity predominate over residues 323-336 (LNGNGSGSTNTTGL). A compositionally biased stretch (basic and acidic residues) spans 342–363 (DHAGQKTKGNDKTGNKNPREAK). Over residues 376–413 (KSNNQPNKGTSRWTIGSDTESSREPSISPNENTTSITK) the composition is skewed to polar residues. S392 is modified (phosphoserine). A compositionally biased stretch (basic and acidic residues) spans 426–452 (LNEKSKTTTMPKKLETKNQEKNNGKTK). T465 carries the phosphothreonine modification. 670–677 (GPPGTGKT) provides a ligand contact to ATP.

It belongs to the DNA2/NAM7 helicase family. In terms of assembly, interacts with the peptidyl release factors SUP35 and weakly with SUP45.

It localises to the cytoplasm. It carries out the reaction ATP + H2O = ADP + phosphate + H(+). In terms of biological role, probable RNA helicase, which may be involved in modulation of the translation termination process. Probably unwinds double-stranded RNA. In vitro, unwinds covalently closed, circular DNA in the presence of a DNA topoisomerase TOP1 and replication factor-A protein RFA1. The chain is Putative ATP-dependent RNA helicase ECM32 (ECM32) from Saccharomyces cerevisiae (strain ATCC 204508 / S288c) (Baker's yeast).